A 175-amino-acid chain; its full sequence is Disulfide bond formation protein B (175 aa).

The Cytoplasmic portion of the chain corresponds to 1 to 13 (MTALTRFAHSRSS). Residues 14-30 (WFLLTGTAIGLEAAALY) traverse the membrane as a helical segment. At 31–48 (FQYVMKLDPCVMCIYQRL) the chain is on the periplasmic side. The cysteines at positions 40 and 43 are disulfide-linked. Residues 49–64 (AVFGILVAGLIGMTAP) traverse the membrane as a helical segment. Residues 65-71 (KYRLIRI) lie on the Cytoplasmic side of the membrane. Residues 72–89 (LGASCWAVSATWGLKLAL) traverse the membrane as a helical segment. Residues 90 to 144 (ALVNMQNNPSPFATCSFLPEFPTWMPLHEWFPAVMLPTGMCTDLPWRFMDVTMAE) are Periplasmic-facing. C104 and C130 are disulfide-bonded. A helical transmembrane segment spans residues 145–163 (WMVVVFSTFLVIWLLFIVP). Residues 164 to 175 (ILSGSTKPSLYK) are Cytoplasmic-facing.

Belongs to the DsbB family.

The protein resides in the cell inner membrane. Required for disulfide bond formation in some periplasmic proteins. Acts by oxidizing the DsbA protein. This is Disulfide bond formation protein B from Shewanella sp. (strain W3-18-1).